An 84-amino-acid chain; its full sequence is Exodeoxyribonuclease 7 small subunit (84 aa).

The protein belongs to the XseB family. Heterooligomer composed of large and small subunits.

The protein resides in the cytoplasm. It carries out the reaction Exonucleolytic cleavage in either 5'- to 3'- or 3'- to 5'-direction to yield nucleoside 5'-phosphates.. Its function is as follows. Bidirectionally degrades single-stranded DNA into large acid-insoluble oligonucleotides, which are then degraded further into small acid-soluble oligonucleotides. This is Exodeoxyribonuclease 7 small subunit from Bartonella bacilliformis (strain ATCC 35685 / KC583 / Herrer 020/F12,63).